Reading from the N-terminus, the 56-residue chain is Conotoxin Cal6.41c (56 aa).

The N-terminal stretch at 1–23 is a signal peptide; the sequence is MSGSGAMLLGLLILVAMATSLDT. Intrachain disulfides connect cysteine 27–cysteine 41, cysteine 33–cysteine 50, and cysteine 40–cysteine 54.

In terms of tissue distribution, expressed by the venom duct.

It is found in the secreted. Probable neurotoxin. The chain is Conotoxin Cal6.41c from Californiconus californicus (California cone).